The primary structure comprises 430 residues: Mucorpepsin (430 aa).

An N-terminal signal peptide occupies residues 1–22 (MLFSQITSAILLTAASLSLTTA). The propeptide at 23-69 (RPVSKQSESKDKLLALPLTSVSRKFSQTKFGQQQLAEKLAGLKPFSE) is activation peptide. Residues 89–421 (YAIPVSIGTP…DFGNNRIGFA (333 aa)) enclose the Peptidase A1 domain. Aspartate 107 is an active-site residue. A disulfide bridge connects residues cysteine 120 and cysteine 126. Asparagine 148 and asparagine 257 each carry an N-linked (GlcNAc...) asparagine glycan. The active site involves aspartate 306. The cysteines at positions 341 and 385 are disulfide-linked.

The protein belongs to the peptidase A1 family.

The catalysed reaction is Hydrolysis of proteins, favoring hydrophobic residues at P1 and P1'. Clots milk. Does not accept Lys at P1, and hence does not activate trypsinogen.. This enzyme, capable of clotting milk is frequently used for cheese production. The chain is Mucorpepsin from Rhizomucor miehei.